We begin with the raw amino-acid sequence, 684 residues long: MADSGNPNENTPSVATGENGEVTGSYNASAITVLEGLDAVRKRPGMYIGSTGERGLHHLVTEVVDNSVDEALAGHADTIDVTILADGGVRVVDNGRGIPVGIVPSEGKPAVEVVLTVLHAGGKFGGGGYSVSGGLHGVGVSVVNALSTKVAVEVKTDGYRWTQDYKLGVPTRRCAQNEATDETGTTVTFWADPDVFETTEYSFETLSRRFQEMAFLNKGLTLKLTDERESAKAVVGADVAGTDSAETPGEEPVRSVTYYYEGGIVDFVKYLNSRKGDLIHPTVIDIDAEDKERMLSVEIAMQWNSQYSEGVYSFANTIHTHEGGTHEEGFRAAMTGLVNRYAREKKFLREKDDNLAGEDIREGLTAIISVKLGEPQFEGQTKTKLGNTEAKTFVQKIVHEHLTDWFDRHPNEAADIIRKSIQAATARVAARKARDLTRRKGLLESASLPGKLSDCQSNDPSKCEIFIVEGDSAGGSAKSGRNPQYQAILPIRGKILNVEKARIDKILQNTEVQALISAFGTGVHEDFDIEKLRYHKIILMADADVDGQHINTLLLTFLFRFMRPLVEAGHVYLSRPPLYKIKWGRDDFEYAYSDRERDALVELGKQNGKRIKEDSIQRFKGLGEMNAEELRITTMDVDHRVLGQVTLDDAAQADDLFSVLMGEDVEARRSFIQRNAKDVRFLDI.

The interval methionine 1–valine 22 is disordered. A novobiocin-binding region spans residues valine 154 to glutamine 302. In terms of domain architecture, Toprim spans cysteine 463 to proline 577. Glutamate 469, aspartate 542, and aspartate 544 together coordinate Mg(2+).

This sequence belongs to the type II topoisomerase GyrB family. Heterotetramer, composed of two GyrA and two GyrB chains. In the heterotetramer, GyrA contains the active site tyrosine that forms a transient covalent intermediate with DNA, while GyrB binds cofactors and catalyzes ATP hydrolysis. Mg(2+) is required as a cofactor. The cofactor is Mn(2+). Requires Ca(2+) as cofactor.

The protein resides in the cytoplasm. The catalysed reaction is ATP-dependent breakage, passage and rejoining of double-stranded DNA.. Its function is as follows. A type II topoisomerase that negatively supercoils closed circular double-stranded (ds) DNA in an ATP-dependent manner to modulate DNA topology and maintain chromosomes in an underwound state. Negative supercoiling favors strand separation, and DNA replication, transcription, recombination and repair, all of which involve strand separation. Also able to catalyze the interconversion of other topological isomers of dsDNA rings, including catenanes and knotted rings. Type II topoisomerases break and join 2 DNA strands simultaneously in an ATP-dependent manner. This chain is DNA gyrase subunit B, novobiocin-sensitive, found in Streptomyces niveus (Streptomyces spheroides).